The following is a 1286-amino-acid chain: MAVISKVTYSLYDQKEINATDIIISHIKNDDDIGTVKDGRLGAMDGALCKTCGKTELECFGHWGKVSIYKTHIVKPEFISEIIRLLNHICIHCGLLRSREPYSDDINLKELSVHALRRLKDKILSKKKSCWNSECMQPYQKITFSKKKVCFVNKLDDINVPNSLIYQKLISIHEKFWPLLEIHQYPANLFYTDYFPIPPLIIRPAISFWIDSIPKETNELTYLLGMIVKNCNLNADEQVIQKAVIEYDDIKIISNNTTSINLSYITSGKNNMIRSYIVARRKDQTARSVIGPSTSITVNEVGMPTYIRNTLTEKIFVNAFTVDKVKQLLASNQVKFYFNKRLNQLTRIRQGKFIKNKIHLLPGDWVEVAVQEYTSIIFGRQPSLHRYNVIASSIRATEGDTIKISPGIANSQNADFDGDEEWMILEQNPKAVVEQSILMYPTTLLKHDIHGAPVYGSIQDEIVAAYSLFRIQDLCLDEVLNILGKYGREFDPKGKCKFSGKDIYTYLIGEKINYPGLLKDGEIIANDVDSNFVVAMRHLSLAGLLSDHKSNVEGINFIIKSSYVFKRYLSIYGFGVTFKDLRPNSTFTNKLEAINVEKIELIKEAYAKYLKDVRDGKIVPLSKALEADYLESMLSNLTNLNIREIEEHMRQTLIDDPDNNLLKMAKAGYKVNPTELMYILGTYGQQRIDGEPAETRVLGRVLPYYLPDSKDPEGRGYILNSLTKGLTGSQYYFSMLVARSQSTDIVCETSRTGTLARKIIKKMEDMVVDGYGQVVIGNTLIKYAANYTKILGSVCKPVDLIYPDESMTWYLEISALWNKIKQGFVYSQKQKLAKKTLAPFNFLVFVKPTTEDNAIKVKDLYDMIHNVIDDVREKYFFTVSNIDFMEYIFLTHLNPSRIRITKETAITIFEKFYEKLNYTLGGGTPIGIISAQVLSEKFTQQALSSFHTTEKSGAVKQKLGFNEFNNLTNLSKNKTEIITLVSDDISKLQSVKINFEFVCLGELNPDITLRKETDRYVVDIIVNRLYIKRAEITELVVEYMIERFISFSVIVKEWGMETFIEDEDNIRFTIYLNFVEPEELNLSKFMMVLPGAANKGKISKFKIPISDYTGYNDFNQTKKLNKMTVELMNLKELGSFDLENVNVYPGVWNTYDIFGIEAARGYLCEAMLNTYGEGFDYLYQPCDLLASLLCASYEPESVNKFKFGAASTLKRATFGDNKALLNAALHKKSEPINDNSSCHFFSKVPNIGTGYYKYFIDLGLLMRMERKLSDKISSQKIKEIEETEDF.

This sequence belongs to the poxviridae DNA-directed RNA polymerase 147 kDa subunit family. The DNA-dependent RNA polymerase used for intermediate and late genes expression consists of eight subunits Rpo30/OPG66, Rpo7/OPG90, Rpo22/OPG103, Rpo147/OPG105, Rpo18/OPG119, Rpo19/OPG131, Rpo132/OPG151 and Rpo35/OPG156. The same holoenzyme, with the addition of the transcription-specificity factor OPG109, is used for early gene expression.

Its subcellular location is the virion. It carries out the reaction RNA(n) + a ribonucleoside 5'-triphosphate = RNA(n+1) + diphosphate. Part of the DNA-dependent RNA polymerase which catalyzes the transcription of viral DNA into RNA using the four ribonucleoside triphosphates as substrates. Responsible for the transcription of early, intermediate and late genes. DNA-dependent RNA polymerase associates with the early transcription factor (ETF), itself composed of OPG118 and OPG133, thereby allowing the early genes transcription. Late transcription, and probably also intermediate transcription, require newly synthesized RNA polymerase. The chain is DNA-directed RNA polymerase 147 kDa polypeptide (OPG105) from Monkeypox virus.